A 901-amino-acid polypeptide reads, in one-letter code: Probable inorganic carbon transporter subunit DabA (901 aa).

Zn(2+) contacts are provided by Cys424, Asp426, His606, and Cys621.

This sequence belongs to the inorganic carbon transporter (TC 9.A.2) DabA family. Forms a complex with DabB. The cofactor is Zn(2+).

The protein localises to the cell membrane. Its function is as follows. Part of an energy-coupled inorganic carbon pump. The sequence is that of Probable inorganic carbon transporter subunit DabA from Staphylococcus aureus (strain MRSA252).